A 290-amino-acid chain; its full sequence is Prepilin leader peptidase/N-methyltransferase (290 aa).

A helical transmembrane segment spans residues 14-34 (LYFSLVFLFSLMIGSFLNVVI). Zn(2+) is bound by residues C74, C77, C99, and C102. Transmembrane regions (helical) follow at residues 106–126 (ISARYPLVELLTALLSVAVAM), 130–150 (PGWGTLAALLLTWVLVALTFI), 161–181 (LTLPLLWGGLLFNLLGGFVSL), 185–205 (VIGAMAGYLVLWSLYWAFKLL), 232–252 (PIVLLLSSLVGAFMGIGLILL), and 261–281 (IPFGPYLAIAGWIALLWGDSI).

It belongs to the peptidase A24 family. The cofactor is Zn(2+).

It localises to the cell inner membrane. It catalyses the reaction Typically cleaves a -Gly-|-Phe- bond to release an N-terminal, basic peptide of 5-8 residues from type IV prepilin, and then N-methylates the new N-terminal amino group, the methyl donor being S-adenosyl-L-methionine.. Functionally, plays an essential role in type IV pili and type II pseudopili formation by proteolytically removing the leader sequence from substrate proteins and subsequently monomethylating the alpha-amino group of the newly exposed N-terminal phenylalanine. The polypeptide is Prepilin leader peptidase/N-methyltransferase (tapD) (Aeromonas hydrophila).